A 430-amino-acid polypeptide reads, in one-letter code: Signal recognition particle receptor FtsY (430 aa).

The disordered stretch occupies residues 75 to 95 (DTGELPAVGDDATVPRDSPRH). GTP is bound by residues 238-245 (GVNGTGKT), 320-324 (DTAGR), and 382-385 (TKLD).

This sequence belongs to the GTP-binding SRP family. FtsY subfamily. Part of the signal recognition particle protein translocation system, which is composed of SRP and FtsY.

Its subcellular location is the cell membrane. The protein resides in the cytoplasm. It carries out the reaction GTP + H2O = GDP + phosphate + H(+). Involved in targeting and insertion of nascent membrane proteins into the cytoplasmic membrane. Acts as a receptor for the complex formed by the signal recognition particle (SRP) and the ribosome-nascent chain (RNC). The chain is Signal recognition particle receptor FtsY from Mycobacterium leprae (strain TN).